Consider the following 415-residue polypeptide: Nacrein-like protein F (415 aa).

N27 carries N-linked (GlcNAc...) asparagine glycosylation. An Alpha-carbonic anhydrase domain is found at 33 to 414; that stretch reads AGFSYDRSIC…KNKVTVYKSF (382 aa). The Zn(2+) site is built by H132, H134, and H157. A disordered region spans residues 201–297; sequence DEPDDEECKH…GENGHKHGCR (97 aa). Residues 207 to 219 are compositionally biased toward basic and acidic residues; it reads ECKHILKGHHPDN. Residues 220–289 are compositionally biased toward low complexity; sequence NENGNGDNGN…NNGENGNNGE (70 aa). A run of 22 repeats spans residues 225–227, 228–230, 231–233, 234–236, 237–239, 240–242, 243–245, 246–248, 249–251, 252–254, 255–257, 258–260, 261–263, 264–266, 267–269, 270–272, 273–275, 276–278, 279–281, 282–284, 285–286, and 288–290. The interval 225 to 290 is 22 X 3 AA approximate tandem repeats of G-X-N; that stretch reads GDNGNNGYNG…NGENGNNGEN (66 aa). A substrate-binding site is contributed by 355 to 356; the sequence is TT.

It belongs to the alpha-carbonic anhydrase family. As to quaternary structure, homooligomer; disulfide-linked. May also be disulfide-linked to insoluble organic matrix. It depends on Zn(2+) as a cofactor. As to expression, expressed in the mantle.

Its subcellular location is the secreted. It is found in the extracellular space. The protein localises to the extracellular matrix. It catalyses the reaction hydrogencarbonate + H(+) = CO2 + H2O. In terms of biological role, acts as a negative regulator for calcification in the shells of mollusks. May function both as a calcium concentrator and as a carbonic anhydrase required for production of carbonate ions, which are assembled to CaCO(3) at mineralization sites. Is important for shell formation in both the calcitic prismatic layer and the aragonitic nacreous layer. Shows inhibitory activity of crystal formation when present in free state but, when attached to the insoluble matrix, may regulate the form and size of aragonite crystal. In Pinctada fucata (Akoya pearl oyster), this protein is Nacrein-like protein F.